Consider the following 366-residue polypeptide: S-adenosylmethionine:tRNA ribosyltransferase-isomerase (366 aa).

This sequence belongs to the QueA family. In terms of assembly, monomer.

The protein resides in the cytoplasm. It catalyses the reaction 7-aminomethyl-7-carbaguanosine(34) in tRNA + S-adenosyl-L-methionine = epoxyqueuosine(34) in tRNA + adenine + L-methionine + 2 H(+). The protein operates within tRNA modification; tRNA-queuosine biosynthesis. Functionally, transfers and isomerizes the ribose moiety from AdoMet to the 7-aminomethyl group of 7-deazaguanine (preQ1-tRNA) to give epoxyqueuosine (oQ-tRNA). This Agrobacterium fabrum (strain C58 / ATCC 33970) (Agrobacterium tumefaciens (strain C58)) protein is S-adenosylmethionine:tRNA ribosyltransferase-isomerase.